We begin with the raw amino-acid sequence, 217 residues long: Adenylate kinase (217 aa).

10 to 15 (GIGKGT) lines the ATP pocket. Residues 30–59 (ATGDIFRKNFQENTPLGKESKKFINKGLLV) form an NMP region. AMP contacts are provided by residues T31, R36, 57-59 (LLV), 85-88 (GFPR), and Q92. Positions 126-163 (GRRICSHCGKVYHLDNLPPKIEGICDKDQKKLIQREDD) are LID. R127 is a binding site for ATP. C130 and C133 together coordinate Zn(2+). Residue 136 to 137 (VY) participates in ATP binding. Zn(2+) is bound by residues C150 and D153. AMP contacts are provided by R160 and R171. An ATP-binding site is contributed by Q199.

It belongs to the adenylate kinase family. Monomer.

It localises to the cytoplasm. The enzyme catalyses AMP + ATP = 2 ADP. Its pathway is purine metabolism; AMP biosynthesis via salvage pathway; AMP from ADP: step 1/1. Functionally, catalyzes the reversible transfer of the terminal phosphate group between ATP and AMP. Plays an important role in cellular energy homeostasis and in adenine nucleotide metabolism. The chain is Adenylate kinase from Phytoplasma australiense.